We begin with the raw amino-acid sequence, 307 residues long: MEAYQAEIIRRFGRVRRARGFYLYTERGVRITDLFLDGGASILGRNASRARLDFKRYLSRGLWGPLPTCASAQLQQALRTCFPAHEVRYYAHAERAQEVCARFLNLACGAAPCEVPVWRPCAPCVPQTDVFLVVPPFPSPAPFVALRAHCAARAPAGDVLFAPIAQAIARAFWDLARVGSLSQPARAMPHALLDSSHTTQEDAVPALPHTKKRRRGLNRVRRAQKCARQERDRAQLITLMSTWWRTEGPYLFPTVSEERYEALFARALDAHILLSPLYTEPSVLPTLEHYTQLCTFFLQEQEKEHHE.

It to B.burgdorferi BB0340.

This is an uncharacterized protein from Treponema pallidum (strain Nichols).